Here is a 265-residue protein sequence, read N- to C-terminus: MDAAKMYGAVLACTDEAVLPVSQVFDAIRELGNEGVEKLDPLVITSASSLSKFPVESSSVDLVVLIWKSLDFPIDQLTQEVLRVLKAGGTTLIRKSSQSAVGSGDKMIPDLENKLLLAGFSEIQALQSSVIKAKKPSWKIGSSFALKKVVKSSPKVQIDFDSDLIDENSLLSEEDLKKPELPSGDCEIGPTRKACKNCSCGRAEEEEKVLKLGLTAEQINNPQSACGSCGLGDAFRCSTCPYKGLPAFKMGEKVALSGNFLAADI.

The interval 1–147 (MDAAKMYGAV…WKIGSSFALK (147 aa)) is N-terminal SAM-like domain. The linker stretch occupies residues 147-176 (KKVVKSSPKVQIDFDSDLIDENSLLSEEDL). 4 residues coordinate [2Fe-2S] cluster: Cys186, Cys195, Cys198, and Cys200. The segment at 186–200 (CEIGPTRKACKNCSC) is fe-S binding site A. Residues Cys226, Cys229, Cys237, and Cys240 each coordinate [4Fe-4S] cluster. Short sequence motifs (cx2C motif) lie at residues 226-229 (CGSC) and 237-240 (CSTC). Residues 226–240 (CGSCGLGDAFRCSTC) form a fe-S binding site B region.

The protein belongs to the anamorsin family. Monomer. [2Fe-2S] cluster is required as a cofactor. It depends on [4Fe-4S] cluster as a cofactor.

The protein localises to the cytoplasm. It is found in the mitochondrion intermembrane space. Functionally, component of the cytosolic iron-sulfur (Fe-S) protein assembly (CIA) machinery. Required for the maturation of extramitochondrial Fe-S proteins. Part of an electron transfer chain functioning in an early step of cytosolic Fe-S biogenesis, facilitating the de novo assembly of a [4Fe-4S] cluster on the cytosolic Fe-S scaffold complex. Electrons are transferred from NADPH via a FAD- and FMN-containing diflavin oxidoreductase. Together with the diflavin oxidoreductase, also required for the assembly of the diferric tyrosyl radical cofactor of ribonucleotide reductase (RNR), probably by providing electrons for reduction during radical cofactor maturation in the catalytic small subunit. The sequence is that of Anamorsin homolog from Medicago truncatula (Barrel medic).